Consider the following 130-residue polypeptide: Small ribosomal subunit protein uS8 (130 aa).

Belongs to the universal ribosomal protein uS8 family. As to quaternary structure, part of the 30S ribosomal subunit.

One of the primary rRNA binding proteins, it binds directly to 16S rRNA central domain where it helps coordinate assembly of the platform of the 30S subunit. This Haloarcula marismortui (strain ATCC 43049 / DSM 3752 / JCM 8966 / VKM B-1809) (Halobacterium marismortui) protein is Small ribosomal subunit protein uS8.